Consider the following 296-residue polypeptide: MMFQQDYPHGFSLVETSLSYEMLDYFQNIVVSNSEDVASQQNSISSSSYSSATLSCSITEQKSHLTEKLSPLRERYGCGDFLSRKRRRRSEKTIVDKENQRMNHIAVERNRRKQMNHFLSILKSMMPLSYSQPNDQASIIEGTISYLKKLEQRLQSLEAQLKATKLNQSPNIFSDFFMFPQYSTATATATATASSSSSSHHHHKRLEVVADVEVTMVERHANIKVLTKTQPRLLFKIINEFNSLGLSTLHLNLTTSKDMSLFTFSVKVEADCQLTPSGNEVANTVHEVVRRVHKER.

Positions 99-150 (NQRMNHIAVERNRRKQMNHFLSILKSMMPLSYSQPNDQASIIEGTISYLKKL) constitute a bHLH domain.

Homodimer. As to expression, expressed constitutively in roots, stems, and flowers.

The protein localises to the nucleus. This Arabidopsis thaliana (Mouse-ear cress) protein is Transcription factor bHLH99 (BHLH99).